Reading from the N-terminus, the 271-residue chain is Pyrroline-5-carboxylate reductase (271 aa).

This sequence belongs to the pyrroline-5-carboxylate reductase family.

The protein resides in the cytoplasm. The catalysed reaction is L-proline + NADP(+) = (S)-1-pyrroline-5-carboxylate + NADPH + 2 H(+). The enzyme catalyses L-proline + NAD(+) = (S)-1-pyrroline-5-carboxylate + NADH + 2 H(+). The protein operates within amino-acid biosynthesis; L-proline biosynthesis; L-proline from L-glutamate 5-semialdehyde: step 1/1. Its function is as follows. Catalyzes the reduction of 1-pyrroline-5-carboxylate (PCA) to L-proline. This Staphylococcus haemolyticus (strain JCSC1435) protein is Pyrroline-5-carboxylate reductase.